The following is a 660-amino-acid chain: Probable cation-transporting P-type ATPase J (660 aa).

5 helical membrane-spanning segments follow: residues 33 to 53 (WAAL…CGAP), 60 to 80 (LFLA…LQAL), 94 to 114 (AAIG…IVIF), 261 to 281 (IGMV…GETL), and 292 to 312 (MIVA…LAAI). The active-site 4-aspartylphosphate intermediate is the Asp-340. Mg(2+) is bound by residues Asp-544 and Asp-548. Residues 598 to 618 (IVVANLIVAVTFIAGLVVWDL) traverse the membrane as a helical segment.

It belongs to the cation transport ATPase (P-type) (TC 3.A.3) family. Type IB subfamily.

It localises to the cell membrane. The enzyme catalyses ATP + H2O = ADP + phosphate + H(+). The protein is Probable cation-transporting P-type ATPase J (ctpJ) of Mycobacterium tuberculosis (strain CDC 1551 / Oshkosh).